Here is a 466-residue protein sequence, read N- to C-terminus: Probable aminotransferase Rv3329 (466 aa).

At Lys294 the chain carries N6-(pyridoxal phosphate)lysine.

It belongs to the class-III pyridoxal-phosphate-dependent aminotransferase family. Pyridoxal 5'-phosphate is required as a cofactor.

Probable aminotransferase. The protein is Probable aminotransferase Rv3329 of Mycobacterium tuberculosis (strain ATCC 25618 / H37Rv).